The chain runs to 373 residues: Protein MGF 360-6L (373 aa).

It belongs to the asfivirus MGF 360 family.

In terms of biological role, plays a role in virus cell tropism, and may be required for efficient virus replication in macrophages. In Ornithodoros (relapsing fever ticks), this protein is Protein MGF 360-6L.